The primary structure comprises 231 residues: GFP-like fluorescent chromoprotein FP506 (231 aa).

Residues 66–68 constitute a cross-link (5-imidazolinone (Asn-Gly)); sequence NYG. A 2,3-didehydrotyrosine modification is found at tyrosine 67.

It belongs to the GFP family. In terms of processing, contains a chromophore consisting of modified amino acid residues. The chromophore is formed by autocatalytic backbone condensation between Xaa-N and Gly-(N+2), and oxidation of Tyr-(N+1) to didehydrotyrosine. Maturation of the chromophore requires nothing other than molecular oxygen. The precise stereochemistry of the tyrosine has not been determined. As to expression, tentacle and oral disk.

Pigment protein that is yellow-green in color. The polypeptide is GFP-like fluorescent chromoprotein FP506 (Zoanthus sp. (Green polyp)).